A 450-amino-acid polypeptide reads, in one-letter code: tRNA-2-methylthio-N(6)-dimethylallyladenosine synthase (450 aa).

Positions 2 to 119 (KKVFVKTYGC…LPDLIARRQR (118 aa)) constitute an MTTase N-terminal domain. Positions 11, 48, 82, 156, 160, and 163 each coordinate [4Fe-4S] cluster. One can recognise a Radical SAM core domain in the interval 142 to 375 (RVEGPSAFVS…QATIEENVQR (234 aa)). The 71-residue stretch at 378 to 448 (QGMVGTVQRI…PHSLRGEIVV (71 aa)) folds into the TRAM domain.

It belongs to the methylthiotransferase family. MiaB subfamily. In terms of assembly, monomer. [4Fe-4S] cluster serves as cofactor.

The protein resides in the cytoplasm. The catalysed reaction is N(6)-dimethylallyladenosine(37) in tRNA + (sulfur carrier)-SH + AH2 + 2 S-adenosyl-L-methionine = 2-methylsulfanyl-N(6)-dimethylallyladenosine(37) in tRNA + (sulfur carrier)-H + 5'-deoxyadenosine + L-methionine + A + S-adenosyl-L-homocysteine + 2 H(+). Its function is as follows. Catalyzes the methylthiolation of N6-(dimethylallyl)adenosine (i(6)A), leading to the formation of 2-methylthio-N6-(dimethylallyl)adenosine (ms(2)i(6)A) at position 37 in tRNAs that read codons beginning with uridine. The sequence is that of tRNA-2-methylthio-N(6)-dimethylallyladenosine synthase from Cupriavidus taiwanensis (strain DSM 17343 / BCRC 17206 / CCUG 44338 / CIP 107171 / LMG 19424 / R1) (Ralstonia taiwanensis (strain LMG 19424)).